The primary structure comprises 198 residues: UPF0314 protein Saro_1818 (198 aa).

5 helical membrane-spanning segments follow: residues 13 to 33 (GGSLAAFGVGLAVVIILLGMG), 62 to 82 (WYSFSHLIHGFLFYGAAHIVW), 96 to 116 (LALAVLIEGSWEILENSPIII), 153 to 173 (APVLVTVVLGIGFELFTLWAI), and 177 to 197 (LALNILMLVWPVEAVRVWQGG).

Belongs to the UPF0314 family.

The protein resides in the cell membrane. The chain is UPF0314 protein Saro_1818 from Novosphingobium aromaticivorans (strain ATCC 700278 / DSM 12444 / CCUG 56034 / CIP 105152 / NBRC 16084 / F199).